Reading from the N-terminus, the 711-residue chain is MLNPIVRKFQYGQHTVTLETGMMARQATAAVMVSMDDTAVFVTVVGAKKAKPGQDFFPLTINYQERTYAAGRIPGGFFRREGRPSEGETLIARLIDRPLRPLFPEGFVNEVQVIATVVSVNPQVNPDIVAMIGASAALSLSGIPFNGPIGAARVGYINDQYVLNPTQDELKSSKLDLVVAGTESAVLMVESEAELLSEDQMLGAVVFGHEQQQVVIQNINDLVKEAGKPRWDWQPEAANEALNARVKALAESRLSDAYRITDKQERYSQIDAIKADVIAALQAEQAEGDALDENELGDILHAIEKNVVRSRVLAGEPRIDGREKDMIRGLDVRTGVLPRTHGSALFTRGETQALVTATLGTERDAQNIDELMGERTDRFLFHYNFPPYSVGETGMVGSPKRREIGHGRLAKRGVLAVMPAADRFPYTVRVVSEITESNGSSSMASVCGASLALMDAGVPIKAAVAGIAMGLVKEGENFVVLSDILGDEDHLGDMDFKVAGSREGITALQMDIKIEGITKEIMQVALNQAKGARLHILGVMEQAINAPRGDISQFAPRIHTIKISPDKIKDVIGKGGSVIRALTEETGTTIEIEDDGTVKIAATDGEKAKHAIRRIEEITAEIEVGRIYNGKVTRIVDFGAFVAIGGGKEGLVHISQIADKRVEKVTDYLQMGQEVPVKVLEVDRQGRVRLSIKEATEQTQEAAAPAAPEAE.

Residues aspartate 489 and aspartate 495 each contribute to the Mg(2+) site. Residues 556–615 (PRIHTIKISPDKIKDVIGKGGSVIRALTEETGTTIEIEDDGTVKIAATDGEKAKHAIRRI) form the KH domain. Residues 625-693 (GRIYNGKVTR…RQGRVRLSIK (69 aa)) form the S1 motif domain.

This sequence belongs to the polyribonucleotide nucleotidyltransferase family. Component of the RNA degradosome, which is a multiprotein complex involved in RNA processing and mRNA degradation. It depends on Mg(2+) as a cofactor.

It localises to the cytoplasm. It catalyses the reaction RNA(n+1) + phosphate = RNA(n) + a ribonucleoside 5'-diphosphate. Functionally, involved in mRNA degradation. Catalyzes the phosphorolysis of single-stranded polyribonucleotides processively in the 3'- to 5'-direction. In Cronobacter sakazakii (strain ATCC BAA-894) (Enterobacter sakazakii), this protein is Polyribonucleotide nucleotidyltransferase.